The following is a 305-amino-acid chain: Small ribosomal subunit biogenesis GTPase RsgA (305 aa).

The 158-residue stretch at Ser-67–Phe-224 folds into the CP-type G domain. Residues Asn-116–Asp-119 and Gly-166–Thr-174 contribute to the GTP site. The Zn(2+) site is built by Cys-248, Cys-253, His-255, and Cys-261.

The protein belongs to the TRAFAC class YlqF/YawG GTPase family. RsgA subfamily. In terms of assembly, monomer. Associates with 30S ribosomal subunit, binds 16S rRNA. It depends on Zn(2+) as a cofactor.

It localises to the cytoplasm. One of several proteins that assist in the late maturation steps of the functional core of the 30S ribosomal subunit. Helps release RbfA from mature subunits. May play a role in the assembly of ribosomal proteins into the subunit. Circularly permuted GTPase that catalyzes slow GTP hydrolysis, GTPase activity is stimulated by the 30S ribosomal subunit. This chain is Small ribosomal subunit biogenesis GTPase RsgA, found in Ruminiclostridium cellulolyticum (strain ATCC 35319 / DSM 5812 / JCM 6584 / H10) (Clostridium cellulolyticum).